Consider the following 438-residue polypeptide: Probable glycine dehydrogenase (decarboxylating) subunit 1 (438 aa).

The protein belongs to the GcvP family. N-terminal subunit subfamily. As to quaternary structure, the glycine cleavage system is composed of four proteins: P, T, L and H. In this organism, the P 'protein' is a heterodimer of two subunits.

It carries out the reaction N(6)-[(R)-lipoyl]-L-lysyl-[glycine-cleavage complex H protein] + glycine + H(+) = N(6)-[(R)-S(8)-aminomethyldihydrolipoyl]-L-lysyl-[glycine-cleavage complex H protein] + CO2. In terms of biological role, the glycine cleavage system catalyzes the degradation of glycine. The P protein binds the alpha-amino group of glycine through its pyridoxal phosphate cofactor; CO(2) is released and the remaining methylamine moiety is then transferred to the lipoamide cofactor of the H protein. This chain is Probable glycine dehydrogenase (decarboxylating) subunit 1, found in Syntrophomonas wolfei subsp. wolfei (strain DSM 2245B / Goettingen).